The following is a 349-amino-acid chain: MALLRKINQVLLFLLIVTLCVILYKKVHKGTVSKNDADDESETPEELEEEIPVVICAAAGRMGATMAAINSIYSNTDANILFYVVGLRNTLTRIRKWIEHSKLREINFKIVEFNPMVLKGKIRPDSSRPELLQPLNFVRFYLPLLIHQHEKVIYLDDDVIVQGDIHELYDTTLALGHAAAFSDDCDLPSAQDINRLVGLQNTYMGYLDYRKKAIKDLGISPSTCSFNPGVIVANMTEWKHQHITKQLEKWMQKNVEENLYSSSLGGGVATSPMLIVFHGKYSTINPLWHIRHLGWNPDARYSEHFLQEAKLLHWNGRHKPWDFPSVHNDLWESWFVPDPAGIFKLNHHS.

Residues 1–6 (MALLRK) lie on the Cytoplasmic side of the membrane. The chain crosses the membrane as a helical; Signal-anchor for type II membrane protein span at residues 7-24 (INQVLLFLLIVTLCVILY). The Lumenal segment spans residues 25–349 (KKVHKGTVSK…AGIFKLNHHS (325 aa)). N234 carries an N-linked (GlcNAc...) asparagine glycan.

The protein belongs to the glycosyltransferase 8 family.

Its subcellular location is the membrane. The polypeptide is Glycosyltransferase 8 domain-containing protein 2 (GLT8D2) (Macaca fascicularis (Crab-eating macaque)).